The following is a 483-amino-acid chain: Aspartyl/glutamyl-tRNA(Asn/Gln) amidotransferase subunit B (483 aa).

This sequence belongs to the GatB/GatE family. GatB subfamily. In terms of assembly, heterotrimer of A, B and C subunits.

It carries out the reaction L-glutamyl-tRNA(Gln) + L-glutamine + ATP + H2O = L-glutaminyl-tRNA(Gln) + L-glutamate + ADP + phosphate + H(+). The catalysed reaction is L-aspartyl-tRNA(Asn) + L-glutamine + ATP + H2O = L-asparaginyl-tRNA(Asn) + L-glutamate + ADP + phosphate + 2 H(+). Allows the formation of correctly charged Asn-tRNA(Asn) or Gln-tRNA(Gln) through the transamidation of misacylated Asp-tRNA(Asn) or Glu-tRNA(Gln) in organisms which lack either or both of asparaginyl-tRNA or glutaminyl-tRNA synthetases. The reaction takes place in the presence of glutamine and ATP through an activated phospho-Asp-tRNA(Asn) or phospho-Glu-tRNA(Gln). This is Aspartyl/glutamyl-tRNA(Asn/Gln) amidotransferase subunit B from Thermomicrobium roseum (strain ATCC 27502 / DSM 5159 / P-2).